Consider the following 172-residue polypeptide: SsrA-binding protein (172 aa).

This sequence belongs to the SmpB family.

Its subcellular location is the cytoplasm. Required for rescue of stalled ribosomes mediated by trans-translation. Binds to transfer-messenger RNA (tmRNA), required for stable association of tmRNA with ribosomes. tmRNA and SmpB together mimic tRNA shape, replacing the anticodon stem-loop with SmpB. tmRNA is encoded by the ssrA gene; the 2 termini fold to resemble tRNA(Ala) and it encodes a 'tag peptide', a short internal open reading frame. During trans-translation Ala-aminoacylated tmRNA acts like a tRNA, entering the A-site of stalled ribosomes, displacing the stalled mRNA. The ribosome then switches to translate the ORF on the tmRNA; the nascent peptide is terminated with the 'tag peptide' encoded by the tmRNA and targeted for degradation. The ribosome is freed to recommence translation, which seems to be the essential function of trans-translation. The polypeptide is SsrA-binding protein (Dehalococcoides mccartyi (strain CBDB1)).